Reading from the N-terminus, the 763-residue chain is Photosystem I P700 chlorophyll a apoprotein A1 (763 aa).

The next 8 helical transmembrane spans lie at 72 to 95 (IFSAHFGHLAVIFIWLSGAYFHGA), 158 to 181 (LYVTAIGALVMAGLMLFAGWFHYH), 197 to 221 (LNHHLAGLLGLGSLSWAGHQIHVSL), 305 to 323 (TAHHHLAIAVLFIVAGHMY), 360 to 383 (WHAQLSINLAILGSISIIVAHHMY), 399 to 425 (LSLFTHHIWIGGFLIVGAGAHAAIFMV), 447 to 469 (AIISHLNWVCIWLGFHSFGLYIH), and 544 to 562 (FMVHHIHAFTIHVTALILL). 2 residues coordinate [4Fe-4S] cluster: C586 and C595. 2 helical membrane passes run 602–623 (HVFLGLFWMYNSLSIVIFHYSW) and 677–699 (TSAYGLLFLGAHFVWAFSLMFLF). H688 contributes to the chlorophyll a' binding site. Positions 696 and 704 each coordinate chlorophyll a. W705 serves as a coordination point for phylloquinone. The helical transmembrane segment at 737 to 757 (AVGVAHYLLGGIVTTWSFFLA) threads the bilayer.

It belongs to the PsaA/PsaB family. The PsaA/B heterodimer binds the P700 chlorophyll special pair and subsequent electron acceptors. PSI consists of a core antenna complex that captures photons, and an electron transfer chain that converts photonic excitation into a charge separation. The cyanobacterial PSI reaction center is composed of one copy each of PsaA,B,C,D,E,F,I,J,K,L,M and X, and forms trimeric complexes. PSI electron transfer chain: 5 chlorophyll a, 1 chlorophyll a', 2 phylloquinones and 3 4Fe-4S clusters. PSI core antenna: 90 chlorophyll a, 22 carotenoids, 3 phospholipids and 1 galactolipid. P700 is a chlorophyll a/chlorophyll a' dimer, A0 is one or more chlorophyll a, A1 is one or both phylloquinones and FX is a shared 4Fe-4S iron-sulfur center. serves as cofactor.

It is found in the cellular thylakoid membrane. It carries out the reaction reduced [plastocyanin] + hnu + oxidized [2Fe-2S]-[ferredoxin] = oxidized [plastocyanin] + reduced [2Fe-2S]-[ferredoxin]. PsaA and PsaB bind P700, the primary electron donor of photosystem I (PSI), as well as the electron acceptors A0, A1 and FX. PSI is a plastocyanin/cytochrome c6-ferredoxin oxidoreductase, converting photonic excitation into a charge separation, which transfers an electron from the donor P700 chlorophyll pair to the spectroscopically characterized acceptors A0, A1, FX, FA and FB in turn. Oxidized P700 is reduced on the lumenal side of the thylakoid membrane by plastocyanin or cytochrome c6. This Synechococcus elongatus (strain ATCC 33912 / PCC 7942 / FACHB-805) (Anacystis nidulans R2) protein is Photosystem I P700 chlorophyll a apoprotein A1.